A 340-amino-acid polypeptide reads, in one-letter code: Coproporphyrin III ferrochelatase (340 aa).

Fe-coproporphyrin III contacts are provided by Ser52 and Tyr116. Positions 172 and 255 each coordinate Fe(2+).

This sequence belongs to the ferrochelatase family.

The protein resides in the cytoplasm. The catalysed reaction is Fe-coproporphyrin III + 2 H(+) = coproporphyrin III + Fe(2+). It participates in porphyrin-containing compound metabolism; protoheme biosynthesis. Its function is as follows. Involved in coproporphyrin-dependent heme b biosynthesis. Catalyzes the insertion of ferrous iron into coproporphyrin III to form Fe-coproporphyrin III. This chain is Coproporphyrin III ferrochelatase, found in Mycobacterium marinum (strain ATCC BAA-535 / M).